The chain runs to 736 residues: Dimethylamine dehydrogenase (736 aa).

Cys-31 is modified (S-6-FMN cysteine). Substrate is bound at residue 176–179; it reads YGAH. The Proton donor role is filled by Tyr-181. The FMN site is built by Arg-229 and Arg-329. 4 residues coordinate [4Fe-4S] cluster: Cys-352, Cys-355, Cys-358, and Cys-371. 398–427 is an ADP binding site; it reads DVLIVGAGPAGSECARVLMERGYTVHLVDT.

In the N-terminal section; belongs to the NADH:flavin oxidoreductase/NADH oxidase family. Requires FMN as cofactor. The cofactor is [4Fe-4S] cluster.

The catalysed reaction is dimethylamine + oxidized [electron-transfer flavoprotein] + H2O + H(+) = methylamine + reduced [electron-transfer flavoprotein] + formaldehyde. This Hyphomicrobium sp. (strain x) protein is Dimethylamine dehydrogenase (dmd).